The following is a 257-amino-acid chain: Probable amino-acid ABC transporter ATP-binding protein HI_1078 (257 aa).

The 241-residue stretch at 4 to 244 (LKVSNIQKNF…PQHERTKQFL (241 aa)) folds into the ABC transporter domain. Residue 36-43 (GPSGSGKT) participates in ATP binding.

It belongs to the ABC transporter superfamily.

It localises to the cell inner membrane. Probably part of a binding-protein-dependent transport system for an amino acid. Probably responsible for energy coupling to the transport system. This is Probable amino-acid ABC transporter ATP-binding protein HI_1078 from Haemophilus influenzae (strain ATCC 51907 / DSM 11121 / KW20 / Rd).